Consider the following 248-residue polypeptide: MSVTMREMLEAGVHFGHQTRFWSPKMAPYIFGARNKIHIVNLEKTLAKYNEAMAFVKKLASSRGTILFVGTKRQAREIIGEEALRAGAPFVDQRWLGGMLTNFKTVKTSIKRLKDMEVAVEAGELEKMPKKEALTFRRELEKLQKSIGGIKEMAGLPDAIFVIDVGYHKIAITEAEKLGIPVIGVVDTNHSPDGVAYVIPGNDDSSRAIQLYARGVADAILEGRSQVVQDIVAAGGDDEFVEVQDAAQ.

The protein belongs to the universal ribosomal protein uS2 family.

The polypeptide is Small ribosomal subunit protein uS2 (Dechloromonas aromatica (strain RCB)).